Reading from the N-terminus, the 385-residue chain is S-type anion channel SLAH1 (385 aa).

The Cytoplasmic portion of the chain corresponds to 1 to 42 (MEIPRQEIHIEIDNSIPSSKEFKTGLADAKPVVLMSALRSLH). Residues 43 to 65 (AGYFRISLSLCSQALLWKIMIAP) form a helical membrane-spanning segment. The Extracellular portion of the chain corresponds to 66–81 (ESPSMSHMHSKLPSMA). Residues 82–102 (FHLLWYLALVTQVSLCFLYAL) traverse the membrane as a helical segment. Over 103–114 (KCIFFFDKVKEE) the chain is Cytoplasmic. The helical transmembrane segment at 115 to 135 (FLHYIGVNYLYAPSISWLLML) threads the bilayer. Topologically, residues 136-150 (QSAPMMEPNSVLYQT) are extracellular. Residues 151–171 (LFWIFAVPVLTLDIKLYGQWF) form a helical membrane-spanning segment. Over 172-176 (TTEKR) the chain is Cytoplasmic. A helical membrane pass occupies residues 177–197 (FLSMLANPASQVSVIANLVAA). At 198–207 (RGAAEMGWNE) the chain is on the extracellular side. Residues 208–228 (CALCMFSLGMVHYLVIFVTLY) form a helical membrane-spanning segment. Over 229–243 (QRLPGGNNFPAKLRP) the chain is Cytoplasmic. The helical transmembrane segment at 244-264 (IFFLFVAAPAMASLAWNSICG) threads the bilayer. Position 265 (Thr-265) is a topological domain, extracellular. The helical transmembrane segment at 266-286 (FDAVAKMLFFLSLFIFMSLVC) threads the bilayer. Over 287–299 (RPNLFKKSMKRFN) the chain is Cytoplasmic. A helical transmembrane segment spans residues 300 to 320 (VAWWAYSFPLTFLALDSVQYA). At 321-330 (QEVKDPVGSG) the chain is on the extracellular side. The helical transmembrane segment at 331 to 351 (LMLIFSSISVLIFLGMMVLTA) threads the bilayer. At 352–385 (ANSNRLLRHDPVLGSATDPKDKQKTLSLNATNQN) the chain is on the cytoplasmic side. The tract at residues 366–385 (SATDPKDKQKTLSLNATNQN) is disordered. Polar residues predominate over residues 376-385 (TLSLNATNQN).

Belongs to the SLAC1 S-type anion channel family. In terms of assembly, homotrimer. Expressed in the vascular systems of root.

The protein localises to the cell membrane. Functionally, slow, weak voltage-dependent S-type anion efflux channel involved in maintenance of anion homeostasis. This Arabidopsis thaliana (Mouse-ear cress) protein is S-type anion channel SLAH1 (SLAH1).